Reading from the N-terminus, the 572-residue chain is Protein IQ-DOMAIN 30 (572 aa).

The interval 75-96 (SDDEIQVSEVQPTDSQDVASVP) is disordered. The segment covering 82 to 92 (SEVQPTDSQDV) has biased composition (polar residues). IQ domains are found at residues 108–136 (QEIA…GIIR) and 137–154 (LQAL…VSTL). A calmodulin-binding region spans residues 159–178 (GIVRLQALARGREIRHSDIG). Disordered regions lie at residues 282–332 (RPKK…MDNP) and 399–572 (IQTH…EWKR). Composition is skewed to polar residues over residues 291-305 (PSSN…QTSS) and 400-419 (QTHT…VNQI). Basic and acidic residues predominate over residues 428-455 (AEEKEDVKEERTPKQNHKENSAGKENQK). Composition is skewed to polar residues over residues 459-493 (KASS…QATK), 502-514 (QGSS…GTTE), and 522-560 (LPSS…SSRE).

Belongs to the IQD family. As to quaternary structure, binds to multiple calmodulin (CaM) in the presence of Ca(2+) and CaM-like proteins.

It is found in the nucleus envelope. It localises to the cytoplasm. The protein localises to the cytoskeleton. Functionally, may be involved in cooperative interactions with calmodulins or calmodulin-like proteins. Recruits calmodulin proteins to microtubules, thus being a potential scaffold in cellular signaling and trafficking. May associate with nucleic acids and regulate gene expression at the transcriptional or post-transcriptional level. The protein is Protein IQ-DOMAIN 30 of Arabidopsis thaliana (Mouse-ear cress).